A 145-amino-acid chain; its full sequence is MKVVGLTKKIMEHLKEPITIKELAKKLNMHPKNLDVKIRVLRDLGLVETKKGRNGGVRLTKEGLYLLEKGEITLGSLKLQIVAKDRIGLLADITSRISKIGGNITSTVLEREGDEVIIYLVVENVDKDEIKNTLEDVVEKISILW.

An ACT domain is found at 78 to 145 (KLQIVAKDRI…DVVEKISILW (68 aa)).

This is an uncharacterized protein from Methanocaldococcus jannaschii (strain ATCC 43067 / DSM 2661 / JAL-1 / JCM 10045 / NBRC 100440) (Methanococcus jannaschii).